An 856-amino-acid polypeptide reads, in one-letter code: DNA mismatch repair protein MutS (856 aa).

Position 609-616 (609-616 (GPNMSGKS)) interacts with ATP.

It belongs to the DNA mismatch repair MutS family.

This protein is involved in the repair of mismatches in DNA. It is possible that it carries out the mismatch recognition step. This protein has a weak ATPase activity. The chain is DNA mismatch repair protein MutS from Finegoldia magna (strain ATCC 29328 / DSM 20472 / WAL 2508) (Peptostreptococcus magnus).